Here is a 281-residue protein sequence, read N- to C-terminus: Foldase protein PrsA (281 aa).

Residues 1 to 18 form the signal peptide; sequence MKKWMMAAAVVSLMALSA. Cys19 is lipidated: N-palmitoyl cysteine. Cys19 carries S-diacylglycerol cysteine lipidation. Residues 133–223 form the PpiC domain; the sequence is KPKIRASHIL…YGYHIIKVTD (91 aa).

Belongs to the PrsA family.

It is found in the cell membrane. It catalyses the reaction [protein]-peptidylproline (omega=180) = [protein]-peptidylproline (omega=0). Its function is as follows. Plays a major role in protein secretion by helping the post-translocational extracellular folding of several secreted proteins. In Geobacillus kaustophilus (strain HTA426), this protein is Foldase protein PrsA.